We begin with the raw amino-acid sequence, 232 residues long: Flagellar L-ring protein (232 aa).

The signal sequence occupies residues 1–15 (MKKVLFYVLPFAFFG). Cys-16 carries N-palmitoyl cysteine lipidation. Cys-16 is lipidated: S-diacylglycerol cysteine.

The protein belongs to the FlgH family. In terms of assembly, the basal body constitutes a major portion of the flagellar organelle and consists of four rings (L,P,S, and M) mounted on a central rod.

It localises to the cell outer membrane. Its subcellular location is the bacterial flagellum basal body. Assembles around the rod to form the L-ring and probably protects the motor/basal body from shearing forces during rotation. The chain is Flagellar L-ring protein from Campylobacter jejuni subsp. doylei (strain ATCC BAA-1458 / RM4099 / 269.97).